The sequence spans 390 residues: Leu/Ile/Val-binding protein homolog 6 (390 aa).

Positions 1–21 are cleaved as a signal peptide; it reads MKKIALTALAVFSLAASAAYA.

This sequence belongs to the leucine-binding protein family.

Its function is as follows. Component of an amino-acid transport system. This chain is Leu/Ile/Val-binding protein homolog 6, found in Brucella suis biovar 1 (strain 1330).